Reading from the N-terminus, the 384-residue chain is MKCPNYTEDSTVLCHMEKTETDLGEVKGHKVSPRKTGALSLRSPAATNVSTPLESRSKGPHNKENYQNKRHSLDMASDDEVIFSGSGLTEDSGYLSLHNSQVDVDGLDSLERSEENCVSSQSLDVECHSGPCLPVLNFQEEACRELQRSYKKNRSYDWTVVDKVAENFGLHNVIGGKMGRQFVDILCKLMRKDMRHILARILGLLGDCDLISCTKVSRTWRKIICQDQLALQRWKKAEKTRRDSGRSMGSLSRDFTLDRVVFSCMQTVSSPPAHKAVKKPPCHMGGAQNATKSSRFQQYVEAAQSLKQHESLRRCSRCSSPARFDAVMQRAVCTRISCAFEFCTLCQSAFHDSTPCRNTVRSFSSTQKTLVAGSARSKRSIRRL.

Positions 25 to 67 are disordered; that stretch reads EVKGHKVSPRKTGALSLRSPAATNVSTPLESRSKGPHNKENYQ. The segment covering 45 to 54 has biased composition (polar residues); that stretch reads AATNVSTPLE. Residues 55–67 are compositionally biased toward basic and acidic residues; it reads SRSKGPHNKENYQ. Residues 187 to 234 enclose the F-box domain; that stretch reads CKLMRKDMRHILARILGLLGDCDLISCTKVSRTWRKIICQDQLALQRW. The segment at 311 to 359 adopts a ZBR-type zinc-finger fold; sequence SLRRCSRCSSPARFDAVMQRAVCTRISCAFEFCTLCQSAFHDSTPCRNT. Zn(2+)-binding residues include Cys315, Cys318, Cys333, Cys338, Cys343, Cys346, His351, and Cys356.

Part of a SCF (SKP1-cullin-F-box) protein ligase complex.

The protein resides in the nucleus. It localises to the cytoplasm. It functions in the pathway protein modification; protein ubiquitination. Its function is as follows. During embryonic development, regulates the integrity of the genome and therefore the cell cycle progression by preventing rereplication through an APC-Cdh1-dependent mechanism. This chain is F-box only protein 5, found in Danio rerio (Zebrafish).